The primary structure comprises 204 residues: ADP-ribosylation factor-like protein 15 (204 aa).

Residues Gly39 to Thr46, Glu82 to Ala86, and Asn142 to Asp145 contribute to the GTP site.

Belongs to the small GTPase superfamily. Arf family.

In Mus musculus (Mouse), this protein is ADP-ribosylation factor-like protein 15 (Arl15).